A 902-amino-acid chain; its full sequence is Methionine--tRNA ligase, cytoplasmic (902 aa).

The 139-residue stretch at 74-212 (GWEQDDLTNQ…QKQPQPQPPP (139 aa)) folds into the GST C-terminal domain. Residues 275 to 285 (PYVNNVPHLGN) carry the 'HIGH' region motif. Residues 595-599 (KFSKS) carry the 'KMSKS' region motif. Lysine 598 is an ATP binding site. Serine 827 is modified (phosphoserine). Residue threonine 837 is modified to Phosphothreonine. Residues 843 to 899 (HIQTLTDEVTKQGNVVRELKAQKADKNQVAAEVAKLLDLKKQLALAEGKPIETPKGK) enclose the WHEP-TRS domain.

This sequence belongs to the class-I aminoacyl-tRNA synthetase family. As to quaternary structure, monomer. Part of a multisubunit complex that groups tRNA ligases for Arg (RARS1), Asp (DARS1), Gln (QARS1), Ile (IARS1), Leu (LARS1), Lys (KARS1), Met (MARS1) the bifunctional ligase for Glu and Pro (EPRS1) and the auxiliary subunits AIMP1/p43, AIMP2/p38 and EEF1E1/p18. Forms a linear complex that contains MARS1, EEF1E1, EPRS1 and AIMP2 that is at the core of the multisubunit complex.

The protein resides in the cytoplasm. The protein localises to the cytosol. Its subcellular location is the nucleus. It localises to the nucleolus. The catalysed reaction is tRNA(Met) + L-methionine + ATP = L-methionyl-tRNA(Met) + AMP + diphosphate. In terms of biological role, catalyzes the specific attachment of an amino acid to its cognate tRNA in a 2 step reaction: the amino acid (AA) is first activated by ATP to form AA-AMP and then transferred to the acceptor end of the tRNA. Plays a role in the synthesis of ribosomal RNA in the nucleolus. The sequence is that of Methionine--tRNA ligase, cytoplasmic (Mars1) from Mus musculus (Mouse).